We begin with the raw amino-acid sequence, 423 residues long: Probable sucrose-phosphate synthase (423 aa).

The protein belongs to the glycosyltransferase 1 family.

The catalysed reaction is beta-D-fructose 6-phosphate + UDP-alpha-D-glucose = sucrose 6(F)-phosphate + UDP + H(+). Functionally, plays a role in sucrose synthesis by catalyzing the first step of sucrose biosynthesis from UDP-glucose and fructose-6-phosphate. This Thermosipho melanesiensis (strain DSM 12029 / CIP 104789 / BI429) protein is Probable sucrose-phosphate synthase.